Reading from the N-terminus, the 1205-residue chain is Nitric oxide synthase 3 (1205 aa).

The segment at M1–V73 is disordered. Residue G2 is the site of N-myristoyl glycine attachment. 2 S-palmitoyl cysteine lipidation sites follow: C15 and C26. Residues C15–G27 are compositionally biased toward gly residues. Over residues L44 to P54 the composition is skewed to pro residues. The Zn(2+) site is built by C96 and C101. The interval R100 to K488 is interaction with NOSIP. A (6R)-L-erythro-5,6,7,8-tetrahydrobiopterin-binding site is contributed by S104. S116 is modified (phosphoserine; by CDK5). Residue C186 coordinates heme b. Residues Q249, W358, Y359, E363, and N368 each coordinate L-arginine. (6R)-L-erythro-5,6,7,8-tetrahydrobiopterin-binding residues include A448, W449, and F462. Y477 is a heme b binding site. Positions V492–M512 are calmodulin-binding. T497 is subject to Phosphothreonine; by AMPK. The 184-residue stretch at A522–F705 folds into the Flavodoxin-like domain. FMN is bound by residues S528, E529, T530, R532, S574, and T575. A phosphoserine mark is found at S617, S635, and S640. FMN contacts are provided by S656, C663, E689, and Q693. An FAD-binding FR-type domain is found at R758–P1004. NADP(+) is bound at residue R778. H800 contributes to the FAD binding site. The interval V819–P850 is disordered. Phosphoserine is present on S838. The FAD site is built by R940, Y942, S943, T958, A960, Y964, V977, C978, and S979. NADP(+)-binding residues include T1018, R1051, S1080, R1081, K1087, Y1089, and Q1091. The residue at position 1177 (T1177) is a Phosphothreonine. Residue S1179 is modified to Phosphoserine; by AMPK. S1181 is modified (phosphoserine).

Belongs to the NOS family. Homodimer. Interacts with NOSIP and NOSTRIN. Interacts with HSP90AB1. Forms a complex with ASL, ASS1 and SLC7A1; the complex regulates cell-autonomous L-arginine synthesis and citrulline recycling while channeling extracellular L-arginine to nitric oxide synthesis pathway. Requires heme b as cofactor. It depends on FAD as a cofactor. FMN serves as cofactor. (6R)-L-erythro-5,6,7,8-tetrahydrobiopterin is required as a cofactor. In terms of processing, phosphorylation by AMPK at Ser-1179 in the presence of Ca(2+)-calmodulin (CaM) activates activity. In absence of Ca(2+)-calmodulin, AMPK also phosphorylates Thr-497, resulting in inhibition of activity. Phosphorylation of Ser-116 by CDK5 reduces activity.

It is found in the membrane. The protein localises to the caveola. The protein resides in the cytoplasm. It localises to the cytoskeleton. Its subcellular location is the golgi apparatus. It is found in the cell membrane. It carries out the reaction 2 L-arginine + 3 NADPH + 4 O2 + H(+) = 2 L-citrulline + 2 nitric oxide + 3 NADP(+) + 4 H2O. With respect to regulation, stimulated by calcium/calmodulin. Inhibited by NOSIP and NOSTRIN. Its function is as follows. Produces nitric oxide (NO) which is implicated in vascular smooth muscle relaxation through a cGMP-mediated signal transduction pathway. NO mediates vascular endothelial growth factor (VEGF)-induced angiogenesis in coronary vessels and promotes blood clotting through the activation of platelets. The sequence is that of Nitric oxide synthase 3 (NOS3) from Canis lupus familiaris (Dog).